We begin with the raw amino-acid sequence, 475 residues long: Bifunctional protein HldE (475 aa).

The segment at 1–318 (MIQYSSKFNN…ENAIHHREET (318 aa)) is ribokinase. 195–198 (NMSE) contributes to the ATP binding site. Asp264 is an active-site residue. The segment at 344–475 (MTNGCFDILH…NVIKKIQASK (132 aa)) is cytidylyltransferase.

In the N-terminal section; belongs to the carbohydrate kinase PfkB family. This sequence in the C-terminal section; belongs to the cytidylyltransferase family. As to quaternary structure, homodimer.

It catalyses the reaction D-glycero-beta-D-manno-heptose 7-phosphate + ATP = D-glycero-beta-D-manno-heptose 1,7-bisphosphate + ADP + H(+). It carries out the reaction D-glycero-beta-D-manno-heptose 1-phosphate + ATP + H(+) = ADP-D-glycero-beta-D-manno-heptose + diphosphate. It functions in the pathway nucleotide-sugar biosynthesis; ADP-L-glycero-beta-D-manno-heptose biosynthesis; ADP-L-glycero-beta-D-manno-heptose from D-glycero-beta-D-manno-heptose 7-phosphate: step 1/4. It participates in nucleotide-sugar biosynthesis; ADP-L-glycero-beta-D-manno-heptose biosynthesis; ADP-L-glycero-beta-D-manno-heptose from D-glycero-beta-D-manno-heptose 7-phosphate: step 3/4. The protein operates within bacterial outer membrane biogenesis; LPS core biosynthesis. Catalyzes the phosphorylation of D-glycero-D-manno-heptose 7-phosphate at the C-1 position to selectively form D-glycero-beta-D-manno-heptose-1,7-bisphosphate. In terms of biological role, catalyzes the ADP transfer from ATP to D-glycero-beta-D-manno-heptose 1-phosphate, yielding ADP-D-glycero-beta-D-manno-heptose. The polypeptide is Bifunctional protein HldE (hldE) (Actinobacillus pleuropneumoniae (Haemophilus pleuropneumoniae)).